The chain runs to 205 residues: MNDNREQLTQQIIDAGRFLYGRGWSPATSSNYSARLDEQRALLTVSGKHKGQLGFDDVLATDLAGNSLEPGKKPSAETLLHTQLYAWNPAIGAVLHTHSVNATVLSRLVRGDRLVLQDYELQKAFAGVTTHEGQVEVPIFDNDQDIARLASRVQPWLEAYPHCPGYLIRGHGLYTWGARMSDALRQVEAFEFLFECELKVLSLSR.

Zn(2+)-binding residues include H96 and H98.

The protein belongs to the aldolase class II family. MtnB subfamily. Zn(2+) is required as a cofactor.

It catalyses the reaction 5-(methylsulfanyl)-D-ribulose 1-phosphate = 5-methylsulfanyl-2,3-dioxopentyl phosphate + H2O. It participates in amino-acid biosynthesis; L-methionine biosynthesis via salvage pathway; L-methionine from S-methyl-5-thio-alpha-D-ribose 1-phosphate: step 2/6. Its function is as follows. Catalyzes the dehydration of methylthioribulose-1-phosphate (MTRu-1-P) into 2,3-diketo-5-methylthiopentyl-1-phosphate (DK-MTP-1-P). This Pseudomonas aeruginosa (strain LESB58) protein is Methylthioribulose-1-phosphate dehydratase.